We begin with the raw amino-acid sequence, 175 residues long: Large ribosomal subunit protein uL15 (175 aa).

Over residues 1 to 13 (MTIKLNELRDNNG) the composition is skewed to basic and acidic residues. Disordered stretches follow at residues 1-44 (MTIK…KARS) and 150-175 (VELP…AKNA). The span at 23–37 (RGIGSGKGKTAGRGQ) shows a compositional bias: gly residues.

This sequence belongs to the universal ribosomal protein uL15 family. As to quaternary structure, part of the 50S ribosomal subunit.

Functionally, binds to the 23S rRNA. This Sphingopyxis alaskensis (strain DSM 13593 / LMG 18877 / RB2256) (Sphingomonas alaskensis) protein is Large ribosomal subunit protein uL15.